We begin with the raw amino-acid sequence, 219 residues long: Chloramphenicol acetyltransferase (219 aa).

Catalysis depends on histidine 193, which acts as the Proton acceptor.

Belongs to the chloramphenicol acetyltransferase family. Homotrimer.

It catalyses the reaction chloramphenicol + acetyl-CoA = chloramphenicol 3-acetate + CoA. In terms of biological role, this enzyme is an effector of chloramphenicol resistance in bacteria. This is Chloramphenicol acetyltransferase (cat) from Klebsiella sp.